A 110-amino-acid chain; its full sequence is Insulin (110 aa).

The first 24 residues, 1–24 (MALWMRLLPLLALLALWGPDPAAA), serve as a signal peptide directing secretion. Cystine bridges form between C31/C96, C43/C109, and C95/C100. Positions 57-87 (EAEDLQVGQVELGGGPGAGSLQPLALEGSLQ) are cleaved as a propeptide — c peptide.

Belongs to the insulin family. As to quaternary structure, heterodimer of a B chain and an A chain linked by two disulfide bonds.

It localises to the secreted. Its function is as follows. Insulin decreases blood glucose concentration. It increases cell permeability to monosaccharides, amino acids and fatty acids. It accelerates glycolysis, the pentose phosphate cycle, and glycogen synthesis in liver. The protein is Insulin (INS) of Gorilla gorilla gorilla (Western lowland gorilla).